A 172-amino-acid polypeptide reads, in one-letter code: Small ribosomal subunit protein uS5c (172 aa).

In terms of domain architecture, S5 DRBM spans 15 to 78 (WEEKVVQVKR…TDAKKHIINV (64 aa)).

Belongs to the universal ribosomal protein uS5 family. In terms of assembly, part of the 30S ribosomal subunit. Contacts protein S4.

It is found in the plastid. The protein resides in the chloroplast. In terms of biological role, with S4 and S12 plays an important role in translational accuracy. The sequence is that of Small ribosomal subunit protein uS5c (rps5) from Gracilaria tenuistipitata var. liui (Red alga).